We begin with the raw amino-acid sequence, 343 residues long: Putative KilA-N domain-containing protein R904 (343 aa).

The KilA-N domain maps to 51 to 157 (EFSWGNYLNL…IKASVIINDY (107 aa)). Residues 159-279 (AKQMFKEHEK…NAVKEYKELY (121 aa)) adopt a coiled-coil conformation.

The sequence is that of Putative KilA-N domain-containing protein R904 from Acanthamoeba polyphaga mimivirus (APMV).